Reading from the N-terminus, the 195-residue chain is Insertion element IS136 uncharacterized protein Atu4601 (195 aa).

The 170-residue stretch at 25-194 (MVMRSNLRWC…SPRQFIRAKS (170 aa)) folds into the Integrase catalytic domain.

In Agrobacterium fabrum (strain C58 / ATCC 33970) (Agrobacterium tumefaciens (strain C58)), this protein is Insertion element IS136 uncharacterized protein Atu4601.